The chain runs to 274 residues: Large ribosomal subunit protein uL2 (274 aa).

Residues 221-274 (RGTAMNPVDHPHGGGEGRNFGKHPVTPWGVQTKGKKTRSNKRTDKFIVRRRSKK) form a disordered region.

This sequence belongs to the universal ribosomal protein uL2 family. Part of the 50S ribosomal subunit. Forms a bridge to the 30S subunit in the 70S ribosome.

Its function is as follows. One of the primary rRNA binding proteins. Required for association of the 30S and 50S subunits to form the 70S ribosome, for tRNA binding and peptide bond formation. It has been suggested to have peptidyltransferase activity; this is somewhat controversial. Makes several contacts with the 16S rRNA in the 70S ribosome. In Yersinia pseudotuberculosis serotype O:1b (strain IP 31758), this protein is Large ribosomal subunit protein uL2.